We begin with the raw amino-acid sequence, 116 residues long: MPKRDIKAFLYDILSYMDDIINFTKDMDYEEFINNKAIKYAVIRCLEVIGEAVKKIPKDIREKYPHIPFKELAGMRDKLIHQYFGVDYLTVWETAKYEIPEIKKEFEKIIKDLEEK.

Active-site residues include R76 and H81. The RX(4)HXY motif signature appears at 76-83 (RDKLIHQY). Y83 carries the post-translational modification O-di-AMP-tyrosine.

It belongs to the HepT RNase toxin family. In terms of assembly, homodimer, probably forms a complex with cognate antitoxin MJ0126. Post-translationally, modified by cognate antitoxin MJ0126; probably at least 2 successive AMPylation events occur on Tyr-83.

Its function is as follows. Probable toxic component of a putative type VII toxin-antitoxin (TA) system, probably an RNase. Probably neutralized by cognate antitoxin MJ0126. Neutralization may be due to AMPylation by MJ0126. This is Putative RNase MJ0125 from Methanocaldococcus jannaschii (strain ATCC 43067 / DSM 2661 / JAL-1 / JCM 10045 / NBRC 100440) (Methanococcus jannaschii).